Reading from the N-terminus, the 469-residue chain is UDP-N-acetylmuramate--L-alanine ligase (469 aa).

Residue 118–124 (GTHGKTT) coordinates ATP.

This sequence belongs to the MurCDEF family.

It is found in the cytoplasm. It carries out the reaction UDP-N-acetyl-alpha-D-muramate + L-alanine + ATP = UDP-N-acetyl-alpha-D-muramoyl-L-alanine + ADP + phosphate + H(+). It functions in the pathway cell wall biogenesis; peptidoglycan biosynthesis. Its function is as follows. Cell wall formation. The sequence is that of UDP-N-acetylmuramate--L-alanine ligase from Ruegeria sp. (strain TM1040) (Silicibacter sp.).